We begin with the raw amino-acid sequence, 224 residues long: Phosphoglycolate phosphatase (224 aa).

Aspartate 8 acts as the Nucleophile in catalysis. Residues aspartate 8 and aspartate 10 each coordinate Mg(2+). Substrate is bound at residue lysine 151. Aspartate 174 and aspartate 178 together coordinate Mg(2+).

This sequence belongs to the archaeal SPP-like hydrolase family. Mg(2+) serves as cofactor.

It catalyses the reaction 2-phosphoglycolate + H2O = glycolate + phosphate. In terms of biological role, catalyzes the dephosphorylation of 2-phosphoglycolate. The protein is Phosphoglycolate phosphatase of Thermoplasma volcanium (strain ATCC 51530 / DSM 4299 / JCM 9571 / NBRC 15438 / GSS1).